Reading from the N-terminus, the 272-residue chain is Transcription factor E2F6 (272 aa).

The interval 1–62 (MSQQRTARRQ…MRKALKVKRP (62 aa)) is binding to corepressors. A DNA-binding region spans residues 50-129 (YVSMRKALKV…SKNHIRWIGS (80 aa)). The short motif at 95–129 (KLGVRKRRVYDITNVLDGIELVEKKSKNHIRWIGS) is the DEF box element. Residues 130 to 222 (DLNNFGAAPQ…PAPREDSITV (93 aa)) are dimerization. The tract at residues 143-164 (LQAELSDLSAMEDALDELIKDC) is leucine-zipper. A transcription repression region spans residues 173–272 (DDKENERLAY…CPEKEDEPPQ (100 aa)). The segment at 242–272 (HSNGKTNDGIGASPSKSSHPQCPEKEDEPPQ) is disordered.

The protein belongs to the E2F/DP family. Forms heterodimers with DP family members TFDP1 or TFDP2. Component of the DRTF1/E2F transcription factor complex. Part of the E2F6.com-1 complex in G0 phase composed of E2F6, MGA, MAX, TFDP1, CBX3, BAT8, EUHMTASE1, RING1, RNF2, MBLR, L3MBTL2 and YAF2. Component of some MLL1/MLL complex, at least composed of the core components KMT2A/MLL1, ASH2L, HCFC1/HCF1, WDR5 and RBBP5, as well as the facultative components BACC1, CHD8, E2F6, HSP70, INO80C, KANSL1, LAS1L, MAX, MCRS1, MGA, KAT8/MOF, PELP1, PHF20, PRP31, RING2, RUVB1/TIP49A, RUVB2/TIP49B, SENP3, TAF1, TAF4, TAF6, TAF7, TAF9 and TEX10.

It is found in the nucleus. Its function is as follows. Inhibitor of E2F-dependent transcription. Binds DNA cooperatively with DP proteins through the E2 recognition site, 5'-TTTC[CG]CGC-3'. Has a preference for the 5'-TTTCCCGC-3' E2F recognition site. E2F6 lacks the transcriptional activation and pocket protein binding domains. Appears to regulate a subset of E2F-dependent genes whose products are required for entry into the cell cycle but not for normal cell cycle progression. Represses expression of some meiosis-specific genes, including SLC25A31/ANT4. May silence expression via the recruitment of a chromatin remodeling complex containing histone H3-K9 methyltransferase activity. Overexpression delays the exit of cells from the S-phase. This chain is Transcription factor E2F6, found in Mus musculus (Mouse).